We begin with the raw amino-acid sequence, 508 residues long: Amphoterin-induced protein 3 (508 aa).

The N-terminal stretch at 1-19 is a signal peptide; that stretch reads MAWLVLSGILLCMLGAGLG. Topologically, residues 20 to 383 are extracellular; the sequence is TSDLEDVLPP…ARPEPETFNT (364 aa). The 37-residue stretch at 25–61 folds into the LRRNT domain; sequence DVLPPAPHNCPDICICAADVLSCAGRGLQDLPVALPT. Disulfide bonds link C34–C40 and C38–C47. LRR repeat units lie at residues 62–83, 86–107, 110–133, 134–155, 158–178, and 184–207; these read TAAE…WLAP, RLRA…AFTN, GLRT…DGLE, ELEK…AFQG, MLSH…NHLH, and RLRT…AALP. Residue N107 is glycosylated (N-linked (GlcNAc...) asparagine). The N-linked (GlcNAc...) asparagine glycan is linked to N142. Residues 219–275 form the LRRCT domain; it reads NPLPCDCSLYHLLRRWHQRGLSALHDFEREYTCLVFKVSESRVRFFEHSRVFKNCSV. 3 disulfides stabilise this stretch: C223-C251, C225-C273, and C300-C352. N-linked (GlcNAc...) asparagine glycosylation is found at N272, N301, N362, and N368. Positions 279-370 constitute an Ig-like C2-type domain; that stretch reads PGLELPEEQL…HNQTLEYNVS (92 aa). The chain crosses the membrane as a helical span at residues 384–404; sequence GFTTLLGCIVGLVLVLLYLFA. At 405 to 508 the chain is on the cytoplasmic side; sequence PPCRGCCHCC…STGSEGLVMS (104 aa).

It belongs to the immunoglobulin superfamily. AMIGO family. In terms of assembly, binds AMIGO1 or AMIGO2. In terms of tissue distribution, ubiquitous.

The protein localises to the membrane. May mediate heterophilic cell-cell interaction. May contribute to signal transduction through its intracellular domain. The chain is Amphoterin-induced protein 3 from Mus musculus (Mouse).